The sequence spans 793 residues: Serine/threonine-protein kinase CLA4 (793 aa).

The interval 8 to 27 is disordered; sequence RELSESDFQDIGPAPKPPPV. The 113-residue stretch at 56-168 folds into the PH domain; the sequence is QRKKSGWVSY…WLDSIFSKCP (113 aa). Residues 173–186 form the CRIB domain; sequence VSSPTNFTHKVHVG. Disordered regions lie at residues 243–369 and 383–476; these read AAAQ…ESPT and QKQL…RPTM. Polar residues-rich tracts occupy residues 258–276, 312–337, and 355–369; these read TLSSNSSQASMQQIASTPP, GVTTSPSVHHQNTQHGKQQSPTQSGP, and LGNSVSSVATKESPT. In terms of domain architecture, Protein kinase spans 498-776; that stretch reads FQMIEKAGQG…TEELLHHSFF (279 aa). Residues 504-512 and K545 contribute to the ATP site; that span reads AGQGASGSV. D644 functions as the Proton acceptor in the catalytic mechanism.

Belongs to the protein kinase superfamily. STE Ser/Thr protein kinase family. STE20 subfamily.

The catalysed reaction is L-seryl-[protein] + ATP = O-phospho-L-seryl-[protein] + ADP + H(+). It catalyses the reaction L-threonyl-[protein] + ATP = O-phospho-L-threonyl-[protein] + ADP + H(+). Functionally, required for hyphal maturation and for septation. The chain is Serine/threonine-protein kinase CLA4 (CLA4) from Eremothecium gossypii (strain ATCC 10895 / CBS 109.51 / FGSC 9923 / NRRL Y-1056) (Yeast).